The chain runs to 95 residues: UPF0358 protein BT9727_3692 (95 aa).

The protein belongs to the UPF0358 family.

This is UPF0358 protein BT9727_3692 from Bacillus thuringiensis subsp. konkukian (strain 97-27).